The primary structure comprises 148 residues: Large ribosomal subunit protein uL13 (148 aa).

It belongs to the universal ribosomal protein uL13 family. Part of the 50S ribosomal subunit.

Functionally, this protein is one of the early assembly proteins of the 50S ribosomal subunit, although it is not seen to bind rRNA by itself. It is important during the early stages of 50S assembly. This chain is Large ribosomal subunit protein uL13, found in Sulfolobus acidocaldarius (strain ATCC 33909 / DSM 639 / JCM 8929 / NBRC 15157 / NCIMB 11770).